The sequence spans 124 residues: Alkaline proteinase inhibitor (124 aa).

An N-terminal signal peptide occupies residues 1–24 (MKGTLTRAALAAGGMMVTSAVMAG). Cysteines 47 and 70 form a disulfide.

This sequence belongs to the protease inhibitor I38 family. Monomer.

It localises to the periplasm. Its function is as follows. Inhibitor of the alkaline protease. Inhibits SMP by formation of a non-covalent complex with a molar ratio of 1:1 and shows a high specificity. The chain is Alkaline proteinase inhibitor (inh) from Serratia marcescens.